A 208-amino-acid polypeptide reads, in one-letter code: Uracil phosphoribosyltransferase (208 aa).

Residues Arg-78, Arg-103, and 130-138 contribute to the 5-phospho-alpha-D-ribose 1-diphosphate site; that span reads DPMLATGGS. Residues Ile-193 and 198–200 each bind uracil; that span reads GDA. Asp-199 is a 5-phospho-alpha-D-ribose 1-diphosphate binding site.

Belongs to the UPRTase family. It depends on Mg(2+) as a cofactor.

It carries out the reaction UMP + diphosphate = 5-phospho-alpha-D-ribose 1-diphosphate + uracil. The protein operates within pyrimidine metabolism; UMP biosynthesis via salvage pathway; UMP from uracil: step 1/1. Its activity is regulated as follows. Allosterically activated by GTP. In terms of biological role, catalyzes the conversion of uracil and 5-phospho-alpha-D-ribose 1-diphosphate (PRPP) to UMP and diphosphate. In Shewanella oneidensis (strain ATCC 700550 / JCM 31522 / CIP 106686 / LMG 19005 / NCIMB 14063 / MR-1), this protein is Uracil phosphoribosyltransferase.